The primary structure comprises 302 residues: 4-hydroxy-tetrahydrodipicolinate synthase (302 aa).

Pyruvate is bound at residue Thr-46. The active-site Proton donor/acceptor is the Tyr-134. Lys-162 serves as the catalytic Schiff-base intermediate with substrate. Residue Val-204 coordinates pyruvate.

It belongs to the DapA family. In terms of assembly, homotetramer; dimer of dimers.

The protein resides in the cytoplasm. It carries out the reaction L-aspartate 4-semialdehyde + pyruvate = (2S,4S)-4-hydroxy-2,3,4,5-tetrahydrodipicolinate + H2O + H(+). It functions in the pathway amino-acid biosynthesis; L-lysine biosynthesis via DAP pathway; (S)-tetrahydrodipicolinate from L-aspartate: step 3/4. In terms of biological role, catalyzes the condensation of (S)-aspartate-beta-semialdehyde [(S)-ASA] and pyruvate to 4-hydroxy-tetrahydrodipicolinate (HTPA). The sequence is that of 4-hydroxy-tetrahydrodipicolinate synthase from Xanthomonas campestris pv. campestris (strain ATCC 33913 / DSM 3586 / NCPPB 528 / LMG 568 / P 25).